Reading from the N-terminus, the 121-residue chain is Ribonuclease P protein component (121 aa).

The protein belongs to the RnpA family. In terms of assembly, consists of a catalytic RNA component (M1 or rnpB) and a protein subunit.

The catalysed reaction is Endonucleolytic cleavage of RNA, removing 5'-extranucleotides from tRNA precursor.. Its function is as follows. RNaseP catalyzes the removal of the 5'-leader sequence from pre-tRNA to produce the mature 5'-terminus. It can also cleave other RNA substrates such as 4.5S RNA. The protein component plays an auxiliary but essential role in vivo by binding to the 5'-leader sequence and broadening the substrate specificity of the ribozyme. This is Ribonuclease P protein component from Desulfosudis oleivorans (strain DSM 6200 / JCM 39069 / Hxd3) (Desulfococcus oleovorans).